Consider the following 240-residue polypeptide: DUP240 protein DFP1 (240 aa).

Residues Met-1–Glu-29 form a disordered region. Helical transmembrane passes span Ile-61–Phe-81 and Val-84–Ile-104.

Belongs to the DUP/COS family.

Its subcellular location is the membrane. The chain is DUP240 protein DFP1 from Saccharomyces cerevisiae (Baker's yeast).